A 186-amino-acid chain; its full sequence is Dirigent protein 4 (186 aa).

The signal sequence occupies residues 1–20 (MGKNLGLVVSFYLCITFALG). N-linked (GlcNAc...) asparagine glycosylation is found at Asn-67, Asn-126, Asn-169, and Asn-180.

Belongs to the plant dirigent protein family. Homodimer.

Its subcellular location is the secreted. The protein localises to the extracellular space. It localises to the apoplast. Dirigent proteins impart stereoselectivity on the phenoxy radical-coupling reaction, yielding optically active lignans from two molecules of coniferyl alcohol in the biosynthesis of lignans, flavonolignans, and alkaloids and thus plays a central role in plant secondary metabolism. This chain is Dirigent protein 4 (DIR4), found in Arabidopsis thaliana (Mouse-ear cress).